Consider the following 358-residue polypeptide: 3-O-methylredipecamine 2-O-methyltransferase IpeOMT3 (358 aa).

S-adenosyl-L-methionine contacts are provided by Gly-193, Asp-216, Asp-236, Met-237, and Lys-250. His-254 functions as the Proton acceptor in the catalytic mechanism.

This sequence belongs to the class I-like SAM-binding methyltransferase superfamily. Cation-independent O-methyltransferase family. In terms of tissue distribution, expressed in roots.

It localises to the cytoplasm. The protein localises to the cytosol. It catalyses the reaction (S)-reticuline + S-adenosyl-L-methionine = (S)-laudanine + S-adenosyl-L-homocysteine + H(+). It functions in the pathway alkaloid biosynthesis. Functionally, O-methyltransferase involved in the biosynthesis of ipecac and benzylisoquinoline monoterpenoid-isoquinoline alkaloids natural products, starting by the condensation of dopamine and secologanin, and including emetine and cephaeline, drugs used both as anti-protozoal (e.g. treatment of ameobiasis) and as emetic agents. Catalyzes 2-O-methylation of 3-O-methylredipecamine and, with less efficiency, the 7-O-methylation of (S)-coclaurine, (R,S)-N-methylcoclaurine, (R,S)-4'-O-methylcoclaurine, (R,S)-6-O-methyllaudanosoline, nororientaline, (S)-norreticuline and (S)-reticuline. The polypeptide is 3-O-methylredipecamine 2-O-methyltransferase IpeOMT3 (Carapichea ipecacuanha (Ipecac)).